The chain runs to 691 residues: Elongation factor G (691 aa).

The tr-type G domain occupies 8–283; the sequence is EDYRNFGIMA…AVVDFLPSPI (276 aa). Residues 17 to 24, 81 to 85, and 135 to 138 each bind GTP; these read AHIDAGKT, DTPGH, and NKMD.

It belongs to the TRAFAC class translation factor GTPase superfamily. Classic translation factor GTPase family. EF-G/EF-2 subfamily.

It is found in the cytoplasm. Functionally, catalyzes the GTP-dependent ribosomal translocation step during translation elongation. During this step, the ribosome changes from the pre-translocational (PRE) to the post-translocational (POST) state as the newly formed A-site-bound peptidyl-tRNA and P-site-bound deacylated tRNA move to the P and E sites, respectively. Catalyzes the coordinated movement of the two tRNA molecules, the mRNA and conformational changes in the ribosome. The protein is Elongation factor G of Xanthobacter autotrophicus (strain ATCC BAA-1158 / Py2).